The primary structure comprises 524 residues: G1/S-specific cyclin-E (524 aa).

The segment at 1–155 (MAGRKSSRTA…EESHEMVRLE (155 aa)) is disordered. A compositionally biased stretch (basic and acidic residues) spans 18-47 (KPERKSAILSPHDELRERLLETAIDMKENI). Positions 48–62 (PQRNTRNSSVGSQKS) are enriched in polar residues. Basic and acidic residues-rich tracts occupy residues 63–78 (DCSETRKRRSTKEGPA), 86–95 (KHRNGSREDS), and 146–155 (EESHEMVRLE).

This sequence belongs to the cyclin family. Cyclin E subfamily. As to quaternary structure, interacts with a member of the CDK2/CDK protein kinases to form a serine/threonine kinase holoenzyme complex. The cyclin subunit imparts substrate specificity to the complex. In terms of tissue distribution, expressed dynamically in proliferating cells throughout development. Detectable in larval blast cells undergoing active proliferation that give rise to all tissue types, including germline, intestine, hypodermis, neurons, and muscle.

The protein localises to the nucleus. Its subcellular location is the cytoplasm. The protein resides in the cytoskeleton. It is found in the microtubule organizing center. It localises to the centrosome. The protein localises to the centriole. Functionally, essential for the control of the cell cycle at the G1/S (start) transition. In association with cdk-2, regulates proliferation, quiescent state and cell fate during the development of several cell lineages. In the embryo, initiates the establishment of cell polarity through the recruitment of the centrosomal proteins spd-2 and spd-5 during prophase. During the development of the vulva, controls the onset of vulval cell terminal differentiation by controlling the duration of G1 phase. During hypoderm development at early larval stages, controls syncytial fate of seam cell daughter cells. Involved in the progression of cell division in the intestinal lineage in larvae, and in particular in endoreplication, a specific growth pathway in the intestinal epithelium, required for feeding and gut development in growing larvae. By controlling the activity of translational repressor gld-1, regulates the pool of germline stem cells and the size of the mitotic zone by preventing entry into meiosis. In addition, repression of expression by gld-1 prevents mitosis re-entry in meiotic germline cells. This is G1/S-specific cyclin-E from Caenorhabditis elegans.